We begin with the raw amino-acid sequence, 217 residues long: Segregation and condensation protein B (217 aa).

The protein belongs to the ScpB family. Homodimer. Homodimerization may be required to stabilize the binding of ScpA to the Smc head domains. Component of a cohesin-like complex composed of ScpA, ScpB and the Smc homodimer, in which ScpA and ScpB bind to the head domain of Smc. The presence of the three proteins is required for the association of the complex with DNA.

The protein resides in the cytoplasm. Functionally, participates in chromosomal partition during cell division. May act via the formation of a condensin-like complex containing Smc and ScpA that pull DNA away from mid-cell into both cell halves. This Geobacillus kaustophilus (strain HTA426) protein is Segregation and condensation protein B.